The sequence spans 785 residues: uncharacterized protein (785 aa).

Residues 53–65 are compositionally biased toward polar residues; sequence KNTLTGSHGSNDL. The disordered stretch occupies residues 53 to 162; the sequence is KNTLTGSHGS…RKAADEQGPI (110 aa). Residues 66–79 are compositionally biased toward acidic residues; sequence ATDESLDSPEDEEA. Polar residues predominate over residues 81-94; that stretch reads SPLQLGTPTSTTSG. Phosphoserine is present on serine 215. Disordered regions lie at residues 571–590 and 631–657; these read KVVD…TSVN and DSSG…RIQF. Over residues 575-584 the composition is skewed to acidic residues; it reads SDDEESDSDE. Serine 667 carries the phosphoserine modification. The interval 693 to 785 is disordered; the sequence is DPKMKFTSHP…FGSIFKKVFG (93 aa). Basic residues predominate over residues 725-739; that stretch reads RKAHHHHHHHNHVSR. Positions 776–785 are enriched in low complexity; sequence FGSIFKKVFG.

This is an uncharacterized protein from Saccharomyces cerevisiae (strain ATCC 204508 / S288c) (Baker's yeast).